The primary structure comprises 131 residues: Small ribosomal subunit protein uS8 (131 aa).

It belongs to the universal ribosomal protein uS8 family. As to quaternary structure, part of the 30S ribosomal subunit. Contacts proteins S5 and S12.

Its function is as follows. One of the primary rRNA binding proteins, it binds directly to 16S rRNA central domain where it helps coordinate assembly of the platform of the 30S subunit. The sequence is that of Small ribosomal subunit protein uS8 from Bacteroides thetaiotaomicron (strain ATCC 29148 / DSM 2079 / JCM 5827 / CCUG 10774 / NCTC 10582 / VPI-5482 / E50).